The sequence spans 415 residues: uncharacterized protein (415 aa).

Disordered regions lie at residues 329–351 and 388–415; these read KFNK…TESS and KSMM…IITL. The span at 338–348 shows a compositional bias: acidic residues; sequence LQNESGDDSET. Residues 399–409 show a composition bias toward basic residues; it reads KSNRKSNKRSN.

This is an uncharacterized protein from Acanthamoeba polyphaga mimivirus (APMV).